The primary structure comprises 199 residues: Chaperone protein TorD (199 aa).

The protein belongs to the TorD/DmsD family. TorD subfamily.

The protein resides in the cytoplasm. Its function is as follows. Involved in the biogenesis of TorA. Acts on TorA before the insertion of the molybdenum cofactor and, as a result, probably favors a conformation of the apoenzyme that is competent for acquiring the cofactor. The protein is Chaperone protein TorD of Shigella boydii serotype 18 (strain CDC 3083-94 / BS512).